The sequence spans 221 residues: Thymine/uracil-DNA glycosylase (221 aa).

A HhH domain is found at 105–133 (DYGGRVPRNRKAILDLPGVGKYTCAAVMC). Residues cysteine 197, cysteine 204, cysteine 207, and cysteine 213 each coordinate [4Fe-4S] cluster.

This sequence belongs to the Nth/MutY family. It depends on [4Fe-4S] cluster as a cofactor.

It carries out the reaction Hydrolyzes mismatched double-stranded DNA and polynucleotides, releasing free thymine.. Functionally, DNA glycosylase that excises thymine from T/G mismatches and uracil from U/G mismatches. Acts as a repair enzyme able to counteract the mutagenic effect of spontaneous hydrolytic deamination of DNA 5-methylcytosine (5-meC) residues that leads to the formation of T/G mismatches. May also repair U/G mismatches arising from hydrolytic deamination of DNA cytosine residues. G/G, A/G, T/C and U/C are minor substrates. The sequence is that of Thymine/uracil-DNA glycosylase from Methanothermobacter thermautotrophicus (Methanobacterium thermoformicicum).